A 228-amino-acid chain; its full sequence is Uridylate kinase (228 aa).

9-10 (GS) contacts ATP. Gly-44 serves as a coordination point for UMP. Positions 45 and 49 each coordinate ATP. Residues Asp-66 and 114–120 (IVAAQTT) contribute to the UMP site. ATP contacts are provided by Thr-140, Tyr-146, and Asp-149.

It belongs to the UMP kinase family. Homohexamer.

Its subcellular location is the cytoplasm. It carries out the reaction UMP + ATP = UDP + ADP. It participates in pyrimidine metabolism; CTP biosynthesis via de novo pathway; UDP from UMP (UMPK route): step 1/1. With respect to regulation, inhibited by UTP. Functionally, catalyzes the reversible phosphorylation of UMP to UDP. This Haloarcula marismortui (strain ATCC 43049 / DSM 3752 / JCM 8966 / VKM B-1809) (Halobacterium marismortui) protein is Uridylate kinase.